Consider the following 89-residue polypeptide: Sec-independent protein translocase protein TatA (89 aa).

A helical transmembrane segment spans residues 1–21; the sequence is MFGLSPAQLIILLVVILLIFG.

This sequence belongs to the TatA/E family. The Tat system comprises two distinct complexes: a TatABC complex, containing multiple copies of TatA, TatB and TatC subunits, and a separate TatA complex, containing only TatA subunits. Substrates initially bind to the TatABC complex, which probably triggers association of the separate TatA complex to form the active translocon.

It is found in the cell inner membrane. Part of the twin-arginine translocation (Tat) system that transports large folded proteins containing a characteristic twin-arginine motif in their signal peptide across membranes. TatA could form the protein-conducting channel of the Tat system. This chain is Sec-independent protein translocase protein TatA, found in Haemophilus influenzae (strain ATCC 51907 / DSM 11121 / KW20 / Rd).